We begin with the raw amino-acid sequence, 448 residues long: Doublesex- and mab-3-related transcription factor A2 (448 aa).

The segment at residues 57–104 (CARCRNHGVVSALKGHKRYCRWKDCMCAKCTLIAERQRVMAAQVALRR) is a DNA-binding region (DM). Positions 166–187 (SQLSGSATPQQSVGKPASTESD) are enriched in polar residues. The tract at residues 166–259 (SQLSGSATPQ…SPSSAASRHM (94 aa)) is disordered. The segment covering 229–239 (GSVSSLGSDSG) has biased composition (low complexity). A DMA domain is found at 259–294 (MNAIDILTRVFPSHKRSVQELVLQGCGKDVVRAIEQ).

This sequence belongs to the DMRT family.

The protein localises to the nucleus. In terms of biological role, may be involved in sexual development. The polypeptide is Doublesex- and mab-3-related transcription factor A2 (dmrta2) (Monopterus albus (Swamp eel)).